We begin with the raw amino-acid sequence, 388 residues long: Trans-enoyl reductase tenC (388 aa).

51-54 (VDGK) serves as a coordination point for NADP(+). Residue 142-149 (VGIASVGM) coordinates substrate. Residues 219–222 (SSES), Y237, and 284–285 (LD) each bind NADP(+). Position 304 to 308 (304 to 308 (SFTQF)) interacts with substrate. Position 373-374 (373-374 (IK)) interacts with NADP(+).

This sequence belongs to the zinc-containing alcohol dehydrogenase family. In terms of assembly, monomer.

It functions in the pathway secondary metabolite biosynthesis. In terms of biological role, trans-enoyl reductase; part of the gene cluster that mediates the biosynthesis of tenellin-type 2-pyridones, iron-chelating compounds involved in iron stress tolerance, competition with the natural competitor fungus Metarhizium robertsii and insect hosts infection. TenC collaborates with the hybrid PKS-NRPS synthetase tenS to catalyze the assembly of the polyketide-amino acid backbone, since tenS lacks a designated enoylreductase (ER) domain. Upon formation of the polyketide backbone on the thiotemplate of tenS, the triketide is transferred to the NRPS module and linked to tyrosine to produce the pyrrolidine-2-dione intermediates, including pretellinin A, 11-hydropretellenin A, 12-hydropretellenin A, 13-hydropretellenin A, 14-hydropretellenin A, 12-oxopretellenin A and prototellinin D. The pathway begins with the assembly of the polyketide-amino acid backbone by the hybrid PKS-NRPS tenS with the help of the enoyl reductase tenC. These enzymes catalyze the synthesis of the pyrrolidine-2-dione intermediates pretellinin A, 11-hydropretellenin A, 12-hydropretellenin A, 13-hydropretellenin A, 14-hydropretellenin A, 12-oxopretellenin A and prototellinin D. The cytochrome P450 monooxygenase tenA then catalyzes an oxidative ring expansion of pretenellin A and 14-hydropretellenin A to form the 2-pyridone core, leading to pretenellin B and pyridovericin, respectively. The cytochrome P450 monooxygenase tenB is then required for the selective N-hydroxylation of the 2-pyridone nitrogen of yield tellinin and 15-hydroxytellenin (15-HT), respectively. The UDP-glucosyltransferase GT1 and the methyltransferase MT1, located outside the tenS gene cluster, contribute to the stepwise glycosylation and methylation of 15-HT to obtain the glycoside pyridovericin-N-O-(4-O-methyl-beta-D-glucopyranoside) (PMGP). Additional related compounds such as 1-O-methyl-15-HT, (8Z)-1-O-methyl-15-HT, and O-methyltenellin A are also produced but the enzymes involved in their biosynthesis have still to be determined. The polypeptide is Trans-enoyl reductase tenC (Beauveria bassiana (strain ARSEF 2860) (White muscardine disease fungus)).